Reading from the N-terminus, the 318-residue chain is tRNA pseudouridine synthase B (318 aa).

The Nucleophile role is filled by Asp47.

It belongs to the pseudouridine synthase TruB family. Type 1 subfamily.

The enzyme catalyses uridine(55) in tRNA = pseudouridine(55) in tRNA. Responsible for synthesis of pseudouridine from uracil-55 in the psi GC loop of transfer RNAs. The protein is tRNA pseudouridine synthase B of Colwellia psychrerythraea (strain 34H / ATCC BAA-681) (Vibrio psychroerythus).